The primary structure comprises 727 residues: Translation initiation factor IF-2, mitochondrial (727 aa).

Residues methionine 1 to methionine 29 constitute a mitochondrion transit peptide. Residues proline 178–lysine 348 enclose the tr-type G domain. Positions glycine 187–threonine 194 are G1. Residue glycine 187–threonine 194 participates in GTP binding. Residues glycine 212–histidine 216 are G2. Residues aspartate 234–glycine 237 and asparagine 288–aspartate 291 each bind GTP. Residues aspartate 234–glycine 237 are G3. The interval asparagine 288–aspartate 291 is G4. The tract at residues serine 324–leucine 326 is G5. Threonine 688 carries the phosphothreonine modification.

The protein belongs to the TRAFAC class translation factor GTPase superfamily. Classic translation factor GTPase family. IF-2 subfamily. In terms of assembly, monomer.

It localises to the mitochondrion. Its function is as follows. One of the essential components for the initiation of protein synthesis. Protects formylmethionyl-tRNA from spontaneous hydrolysis and promotes its binding to the 30S ribosomal subunits. Also involved in the hydrolysis of GTP during the formation of the 70S ribosomal complex. The protein is Translation initiation factor IF-2, mitochondrial (MTIF2) of Bos taurus (Bovine).